A 223-amino-acid polypeptide reads, in one-letter code: Bone marrow proteoglycan (223 aa).

Positions 1–16 (MKFPLLLALLVGGASA) are cleaved as a signal peptide. The propeptide at 17–106 (LHLSSETSDS…TSLMGDSGCK (90 aa)) is acidic. Residues 20–81 (SSETSDSKSP…PGDEGAVSGQ (62 aa)) are disordered. O-linked (GalNAc...) threonine; partial glycosylation is present at Thr23. An O-linked (GalNAc...) serine glycan is attached at Ser24. Residue Ser66 is glycosylated (O-linked (Xyl...) (chondroitin sulfate) serine). Residues 124 to 223 (SVCRRCYRGT…VKRRPFICSY (100 aa)) form the C-type lectin domain. 2 disulfides stabilise this stretch: Cys126–Cys221 and Cys198–Cys213.

Post-translationally, nitrated.

Its subcellular location is the secreted. In terms of biological role, cytotoxin and helminthotoxin. MBP also induces non-cytolytic histamine release from basophils. It is involved in antiparasitic defense mechanisms and immune hypersensitivity reactions. This Mus musculus (Mouse) protein is Bone marrow proteoglycan (Prg2).